The following is a 343-amino-acid chain: MSKIKVLVVDDSAIVRKIFTEELSKYPDIEVVGSAPDPFVARDKIVHLKPDVITLDIEMPRMDGLTFLKKLMRHYPLPAIIVSSLTPKGGKLTLEAMDIGAVDAIAKPGSSYSVGDMSGQLVEKIRAASGARVVRKSTQEMFQPGSRLSIRSLAETSNKVIAIGASTGGTEALKNVLSRMPPDSPGILVVQHMPANFTTAFAERLNSLCQIGVKEAADNDSVTPGTALIAPGNYHMILRRSGARYYVQIKMGPMVHHQRPAVDVLFKSTAKYAGANAIGVILTGMGADGAAGLLEMKQMGAGTIAQNEKSCIVYGMPKEAVKIGAVDKIVHLDSIADEIVRMV.

The 118-residue stretch at 5 to 122 folds into the Response regulatory domain; sequence KVLVVDDSAI…SVGDMSGQLV (118 aa). Asp56 carries the post-translational modification 4-aspartylphosphate. The CheB-type methylesterase domain maps to 154 to 343; that stretch reads AETSNKVIAI…SIADEIVRMV (190 aa). Active-site residues include Ser166, His192, and Asp288.

It belongs to the CheB family. Phosphorylated by CheA. Phosphorylation of the N-terminal regulatory domain activates the methylesterase activity.

The protein localises to the cytoplasm. The enzyme catalyses [protein]-L-glutamate 5-O-methyl ester + H2O = L-glutamyl-[protein] + methanol + H(+). It carries out the reaction L-glutaminyl-[protein] + H2O = L-glutamyl-[protein] + NH4(+). Its function is as follows. Involved in chemotaxis. Part of a chemotaxis signal transduction system that modulates chemotaxis in response to various stimuli. Catalyzes the demethylation of specific methylglutamate residues introduced into the chemoreceptors (methyl-accepting chemotaxis proteins or MCP) by CheR. Also mediates the irreversible deamidation of specific glutamine residues to glutamic acid. In Syntrophus aciditrophicus (strain SB), this protein is Protein-glutamate methylesterase/protein-glutamine glutaminase 2.